The chain runs to 443 residues: Ribosomal protein uS12 methylthiotransferase RimO (443 aa).

The MTTase N-terminal domain occupies 10–120 (PRVGFVSLGC…VMAAVHAQCP (111 aa)). [4Fe-4S] cluster-binding residues include Cys-19, Cys-55, Cys-84, Cys-152, Cys-156, and Cys-159. One can recognise a Radical SAM core domain in the interval 138–375 (LTPRHYAYLK…MALQAEISAR (238 aa)). The region spanning 378-443 (ARRVGTECTV…DEHDLYGRVL (66 aa)) is the TRAM domain.

It belongs to the methylthiotransferase family. RimO subfamily. Requires [4Fe-4S] cluster as cofactor.

The protein localises to the cytoplasm. It carries out the reaction L-aspartate(89)-[ribosomal protein uS12]-hydrogen + (sulfur carrier)-SH + AH2 + 2 S-adenosyl-L-methionine = 3-methylsulfanyl-L-aspartate(89)-[ribosomal protein uS12]-hydrogen + (sulfur carrier)-H + 5'-deoxyadenosine + L-methionine + A + S-adenosyl-L-homocysteine + 2 H(+). Functionally, catalyzes the methylthiolation of an aspartic acid residue of ribosomal protein uS12. This chain is Ribosomal protein uS12 methylthiotransferase RimO, found in Alkalilimnicola ehrlichii (strain ATCC BAA-1101 / DSM 17681 / MLHE-1).